Reading from the N-terminus, the 110-residue chain is T cell receptor alpha variable 35 (110 aa).

The N-terminal stretch at 1 to 19 (MLLEHLLIILWMQLTWVSG) is a signal peptide. One can recognise an Ig-like domain in the interval 20-110 (QQLNQSPQSM…DVGIYFCAGQ (91 aa)). N-linked (GlcNAc...) asparagine glycosylation is found at Asn-40 and Asn-93. Cys-41 and Cys-107 are oxidised to a cystine.

As to quaternary structure, alpha-beta TR is a heterodimer composed of an alpha and beta chain; disulfide-linked. The alpha-beta TR is associated with the transmembrane signaling CD3 coreceptor proteins to form the TR-CD3 (TcR or TCR). The assembly of alpha-beta TR heterodimers with CD3 occurs in the endoplasmic reticulum where a single alpha-beta TR heterodimer associates with one CD3D-CD3E heterodimer, one CD3G-CD3E heterodimer and one CD247 homodimer forming a stable octameric structure. CD3D-CD3E and CD3G-CD3E heterodimers preferentially associate with TR alpha and TR beta chains, respectively. The association of the CD247 homodimer is the last step of TcR assembly in the endoplasmic reticulum and is required for transport to the cell surface.

It localises to the cell membrane. V region of the variable domain of T cell receptor (TR) alpha chain that participates in the antigen recognition. Alpha-beta T cell receptors are antigen specific receptors which are essential to the immune response and are present on the cell surface of T lymphocytes. Recognize peptide-major histocompatibility (MH) (pMH) complexes that are displayed by antigen presenting cells (APC), a prerequisite for efficient T cell adaptive immunity against pathogens. Binding of alpha-beta TR to pMH complex initiates TR-CD3 clustering on the cell surface and intracellular activation of LCK that phosphorylates the ITAM motifs of CD3G, CD3D, CD3E and CD247 enabling the recruitment of ZAP70. In turn ZAP70 phosphorylates LAT, which recruits numerous signaling molecules to form the LAT signalosome. The LAT signalosome propagates signal branching to three major signaling pathways, the calcium, the mitogen-activated protein kinase (MAPK) kinase and the nuclear factor NF-kappa-B (NF-kB) pathways, leading to the mobilization of transcription factors that are critical for gene expression and essential for T cell growth and differentiation. The T cell repertoire is generated in the thymus, by V-(D)-J rearrangement. This repertoire is then shaped by intrathymic selection events to generate a peripheral T cell pool of self-MH restricted, non-autoaggressive T cells. Post-thymic interaction of alpha-beta TR with the pMH complexes shapes TR structural and functional avidity. In Homo sapiens (Human), this protein is T cell receptor alpha variable 35.